The following is a 132-amino-acid chain: Small ribosomal subunit protein uS8c (132 aa).

Belongs to the universal ribosomal protein uS8 family. In terms of assembly, part of the 30S ribosomal subunit.

It localises to the plastid. Its subcellular location is the chloroplast. Functionally, one of the primary rRNA binding proteins, it binds directly to 16S rRNA central domain where it helps coordinate assembly of the platform of the 30S subunit. This Pinus thunbergii (Japanese black pine) protein is Small ribosomal subunit protein uS8c (rps8).